We begin with the raw amino-acid sequence, 599 residues long: Protein ECM25 (599 aa).

The Rho-GAP domain occupies 181–359 (NRLTPLAIRQ…NLLDFFPEIA (179 aa)). 3 disordered regions span residues 362–447 (ISSP…PLPI), 468–495 (ASSS…SSTD), and 543–563 (ELQE…KFSQ). Composition is skewed to low complexity over residues 363–373 (SSPPSSVSSSS), 396–413 (TLPR…TSPT), and 468–483 (ASSS…KTPS). Over residues 543–562 (ELQEKKKKNETTSKTADKFS) the composition is skewed to basic and acidic residues.

The protein localises to the cytoplasm. May be involved in cell wall organization and biogenesis. This chain is Protein ECM25 (ECM25), found in Saccharomyces cerevisiae (strain ATCC 204508 / S288c) (Baker's yeast).